The primary structure comprises 258 residues: ProSAAS (258 aa).

A signal peptide spans 1–33 (MAGSPLLCGPRAGGVGILVLLLLGLLRLPPTLS). A proSAAS(1-180) region spans residues 34-213 (ARPVKEPRSL…SSEPEAAPAP (180 aa)). 3 disordered regions span residues 156-188 (PAPA…TPDV), 204-230 (SSEP…EVPP), and 239-258 (RVKR…LLPP). Residues 177-188 (DVEDAGDETPDV) are compositionally biased toward acidic residues. Residues 204 to 213 (SSEPEAAPAP) show a composition bias toward low complexity. The tract at residues 219–258 (SVDQDLGPEVPPENVLGALLRVKRLENPSPQAPARRLLPP) is C-terminal inhibitory domain; interacts with PCSK1. A Sufficient for inhibition of PCSK1 motif is present at residues 237 to 242 (LLRVKR).

As to quaternary structure, interacts via the C-terminal inhibitory domain with PCSK1 66 kDa form. Post-translationally, proteolytically cleaved in the Golgi. Little SAAS, PEN, PEN-20 and Big LEN are the major processed peptides in proSAAS-overexpressing AtT-20 pituitary corticotropic cell line. As to expression, expressed in brain (mostly hypothalamus and pituitary) and gut. Expressed in trigeminal ganglia and neuroendocrine cell lines. Expressed in pancreas, spinal cord and brain (most abundant in striatum, hippocampus, pons and medulla, and cortex) (at protein level).

Its subcellular location is the secreted. It localises to the golgi apparatus. It is found in the trans-Golgi network. May function in the control of the neuroendocrine secretory pathway. Proposed be a specific endogenous inhibitor of PCSK1. ProSAAS and Big PEN-LEN, both containing the C-terminal inhibitory domain, but not the processed peptides reduce PCSK1 activity in the endoplasmic reticulum and Golgi. It reduces the activity of the 87 kDa form but not the autocatalytically derived 66 kDa form of PCSK1. Subsequent processing of proSAAS may eliminate the inhibition. Slows down convertase-mediated processing of proopiomelanocortin and proenkephalin. May control the intracellular timing of PCSK1 rather than its total level of activity. Its function is as follows. Endogenous ligand for GPR171. Neuropeptide involved in the regulation of feeding. Functionally, endogenous ligand for GPR171. Neuropeptide involved in the regulation of feeding. This chain is ProSAAS (Pcsk1n), found in Mus musculus (Mouse).